The primary structure comprises 239 residues: Ribosomal RNA small subunit methyltransferase A (239 aa).

S-adenosyl-L-methionine contacts are provided by Asn23, Ile25, Gly50, Glu72, Asp97, and Asn116.

Belongs to the class I-like SAM-binding methyltransferase superfamily. rRNA adenine N(6)-methyltransferase family. RsmA subfamily.

It localises to the cytoplasm. The enzyme catalyses adenosine(1518)/adenosine(1519) in 16S rRNA + 4 S-adenosyl-L-methionine = N(6)-dimethyladenosine(1518)/N(6)-dimethyladenosine(1519) in 16S rRNA + 4 S-adenosyl-L-homocysteine + 4 H(+). In terms of biological role, specifically dimethylates two adjacent adenosines (A1518 and A1519) in the loop of a conserved hairpin near the 3'-end of 16S rRNA in the 30S particle. May play a critical role in biogenesis of 30S subunits. In Rickettsia felis (strain ATCC VR-1525 / URRWXCal2) (Rickettsia azadi), this protein is Ribosomal RNA small subunit methyltransferase A.